The chain runs to 271 residues: Large ribosomal subunit protein uL3c (271 aa).

The transit peptide at 1 to 49 (MAIAMAVVSFPSLLNKTTLSSSLFTPTFLPAKSSSLLIKSSPKTRFVVS) directs the protein to the chloroplast. Positions 190 to 222 (HGSKSHRALGSIGAGTTPGRVYKGKKMPGRMGG) are disordered.

Belongs to the universal ribosomal protein uL3 family. As to quaternary structure, part of the 50S ribosomal subunit.

It localises to the plastid. Its subcellular location is the chloroplast. Functionally, one of the primary rRNA binding proteins, it binds directly near the 3'-end of the 23S rRNA, where it nucleates assembly of the 50S subunit. The sequence is that of Large ribosomal subunit protein uL3c (RPL3A) from Arabidopsis thaliana (Mouse-ear cress).